A 745-amino-acid chain; its full sequence is Phosphate transporter PHO1 homolog 4 (745 aa).

Positions 1-290 (MRFGKEFVSQ…KRNAAKLYME (290 aa)) constitute an SPX domain. Topologically, residues 1-342 (MRFGKEFVSQ…KINKERHLIT (342 aa)) are cytoplasmic. A helical transmembrane segment spans residues 343–363 (FSTGFFFGCGISLIVALGLII). The Extracellular segment spans residues 364–383 (HARNIMGTPGQRTYMETMFP). A helical membrane pass occupies residues 384-404 (LYRFFGFVVLHMDVYAANIYF). Over 405–427 (WRRYRVNYSFIFGFKQGTELGYR) the chain is Cytoplasmic. The chain crosses the membrane as a helical span at residues 428–448 (HVLLLSFGLGTLSLCAVLLNL). Over 449–464 (DMEMDAQTKDYRLVTE) the chain is Extracellular. A helical transmembrane segment spans residues 465–485 (LIPLFLLVLVIIIVLCPFNIL). Residues 486-615 (YRSSRFFFLS…YTLNRGSNWN (130 aa)) lie on the Cytoplasmic side of the membrane. The region spanning 550-744 (TSNIGFRTFY…NYEEDGDHHN (195 aa)) is the EXS domain. The helical transmembrane segment at 616 to 636 (ITAWVFSGVATFYGTYWDIVL) threads the bilayer. The Extracellular segment spans residues 637–660 (DWGLLQRGCKNSFLRDKLLVPHKT). A helical transmembrane segment spans residues 661-681 (VYYAAMVLNVLLRLVWLQTVL). Residues 682-745 (DLKFSFLHRE…YEEDGDHHNN (64 aa)) lie on the Cytoplasmic side of the membrane.

It belongs to the SYG1 (TC 2.A.94) family. As to expression, expressed in root epidermis and cortex, leaf hydathodes, pollen grains and stigma apex.

The protein resides in the cell membrane. Functionally, may transport inorganic phosphate (Pi). The polypeptide is Phosphate transporter PHO1 homolog 4 (PHO1-H4) (Arabidopsis thaliana (Mouse-ear cress)).